We begin with the raw amino-acid sequence, 187 residues long: Biogenesis of lysosome-related organelles complex 1 subunit 5 (187 aa).

The disordered stretch occupies residues 1 to 26 (MSGGGTETPVGCEAAPGGGSKKRDSL). At S2 the chain carries N-acetylserine. Residues 154 to 186 (NKRAEVDEEHRKAMERLKEQYAEMEKDLAKFST) are a coiled coil.

It belongs to the BLOC1S5 family. Interacts with BLOC1S4, DTNBP1/BLOC1S7 and PI4K2A. Component of the biogenesis of lysosome-related organelles complex 1 (BLOC-1) composed of BLOC1S1, BLOC1S2, BLOC1S3, BLOC1S4, BLOC1S5, BLOC1S6, DTNBP1/BLOC1S7 and SNAPIN/BLOC1S8. Octamer composed of one copy each BLOC1S1, BLOC1S2, BLOC1S3, BLOC1S4, BLOC1S5, BLOC1S6, DTNBP1/BLOC1S7 and SNAPIN/BLOC1S8. The BLOC-1 complex associates with the AP-3 protein complex and membrane protein cargos. Interacts with BLOC1S6.

Component of the BLOC-1 complex, a complex that is required for normal biogenesis of lysosome-related organelles (LRO), such as platelet dense granules and melanosomes. In concert with the AP-3 complex, the BLOC-1 complex is required to target membrane protein cargos into vesicles assembled at cell bodies for delivery into neurites and nerve terminals. The BLOC-1 complex, in association with SNARE proteins, is also proposed to be involved in neurite extension. Plays a role in intracellular vesicle trafficking. This is Biogenesis of lysosome-related organelles complex 1 subunit 5 from Homo sapiens (Human).